We begin with the raw amino-acid sequence, 289 residues long: ATP phosphoribosyltransferase (289 aa).

Belongs to the ATP phosphoribosyltransferase family. Long subfamily. Requires Mg(2+) as cofactor.

Its subcellular location is the cytoplasm. It catalyses the reaction 1-(5-phospho-beta-D-ribosyl)-ATP + diphosphate = 5-phospho-alpha-D-ribose 1-diphosphate + ATP. It functions in the pathway amino-acid biosynthesis; L-histidine biosynthesis; L-histidine from 5-phospho-alpha-D-ribose 1-diphosphate: step 1/9. With respect to regulation, feedback inhibited by histidine. Catalyzes the condensation of ATP and 5-phosphoribose 1-diphosphate to form N'-(5'-phosphoribosyl)-ATP (PR-ATP). Has a crucial role in the pathway because the rate of histidine biosynthesis seems to be controlled primarily by regulation of HisG enzymatic activity. The polypeptide is ATP phosphoribosyltransferase (Desulforudis audaxviator (strain MP104C)).